Reading from the N-terminus, the 105-residue chain is MRGMGNMQGMMKQMQKMQKEMAKAQADLEAQEFTGTAGGGMVTVKAIGKRVITDVVINEEVVDPEDIEMLQDLVLAATNDVLKQIEDTTSQTMGKFTQGLNLPGM.

The span at Met1 to Lys16 shows a compositional bias: low complexity. The disordered stretch occupies residues Met1–Lys23.

The protein belongs to the YbaB/EbfC family. As to quaternary structure, homodimer.

The protein localises to the cytoplasm. It localises to the nucleoid. Its function is as follows. Binds to DNA and alters its conformation. May be involved in regulation of gene expression, nucleoid organization and DNA protection. The polypeptide is Nucleoid-associated protein lin2851 (Listeria innocua serovar 6a (strain ATCC BAA-680 / CLIP 11262)).